Here is a 4092-residue protein sequence, read N- to C-terminus: Dynein heavy chain, cytoplasmic (4092 aa).

Residues 1–1757 (MCKNEARLAN…FISQSGYLLQ (1757 aa)) are stem. Coiled-coil stretches lie at residues 154 to 175 (VETIDKTRRKLDDISKQFQQLH), 486 to 508 (KLEQAESEFSKNMLDLEKKLQNT), 542 to 566 (KVLENQQILLLEIKKDIRQLETGLE), 932 to 959 (VIKLKDDIQNCIEQVQNLHCKINSYVKE), 1042 to 1063 (YERDARKLHEDMNRDREAVEDM), and 1681 to 1705 (KGLLDKLNKSSDNVKKKIEALLVEY). AAA stretches follow at residues 1758-1979 (YKFE…VLRN), 2036-2273 (QCLK…NDLV), 2379-2628 (SLEA…LVRG), and 2722-2984 (TFCD…KVGV). Residues 1796-1803 (GPAGTGKT), 2074-2081 (GKAGCGKT), 2418-2425 (GPPGSGKT), and 2760-2767 (GASRTGKT) contribute to the ATP site. 3 coiled-coil regions span residues 2993 to 3092 (IDGL…KRKE), 3242 to 3300 (KTKA…KSLT), and 3532 to 3608 (ITLT…EEFF). Positions 2993-3300 (IDGLRALVKL…RSISLVKSLT (308 aa)) are stalk. 2 AAA regions span residues 3370 to 3599 (LVTL…NIEK) and 3760 to 3970 (LNWF…YLEN).

It belongs to the dynein heavy chain family. In terms of assembly, the dynein complex consists of at least two heavy chains and a number of intermediate and light chains. Interacts with DYN3.

The protein localises to the cytoplasm. It is found in the cytoskeleton. In terms of biological role, cytoplasmic dynein acts as a motor for the intracellular retrograde motility of vesicles and organelles along microtubules. Dynein has ATPase activity; the force-producing power stroke is thought to occur on release of ADP. Required to maintain uniform nuclear distribution in hyphae. May play an important role in the proper orientation of the mitotic spindle into the budding daughter cell yeast. Probably required for normal progression of the cell cycle. This Saccharomyces cerevisiae (strain ATCC 204508 / S288c) (Baker's yeast) protein is Dynein heavy chain, cytoplasmic (DYN1).